The primary structure comprises 435 residues: Trigger factor (435 aa).

In terms of domain architecture, PPIase FKBP-type spans 162 to 247 (GDRVIIDFKG…VKNVAEATLP (86 aa)).

Belongs to the FKBP-type PPIase family. Tig subfamily.

It is found in the cytoplasm. The catalysed reaction is [protein]-peptidylproline (omega=180) = [protein]-peptidylproline (omega=0). Involved in protein export. Acts as a chaperone by maintaining the newly synthesized protein in an open conformation. Functions as a peptidyl-prolyl cis-trans isomerase. The protein is Trigger factor of Chromobacterium violaceum (strain ATCC 12472 / DSM 30191 / JCM 1249 / CCUG 213 / NBRC 12614 / NCIMB 9131 / NCTC 9757 / MK).